The following is a 92-amino-acid chain: Small ribosomal subunit protein uS19 (92 aa).

This sequence belongs to the universal ribosomal protein uS19 family.

In terms of biological role, protein S19 forms a complex with S13 that binds strongly to the 16S ribosomal RNA. This Vibrio parahaemolyticus serotype O3:K6 (strain RIMD 2210633) protein is Small ribosomal subunit protein uS19.